A 511-amino-acid chain; its full sequence is Ulvan-active sulfatase (511 aa).

The N-terminal stretch at M1–S34 is a signal peptide. C35 is lipidated: N-palmitoyl cysteine. C35 is lipidated: S-diacylglycerol cysteine. Ca(2+) is bound by residues D59 and C99. Residue C99 is the Nucleophile of the active site. Position 99 is a 3-oxoalanine (Cys) (C99). H149 is a catalytic residue. D305 provides a ligand contact to Ca(2+).

This sequence belongs to the sulfatase family. Ca(2+) serves as cofactor. Post-translationally, the conversion to 3-oxoalanine (also known as C-formylglycine, FGly), of a serine or cysteine residue in prokaryotes and of a cysteine residue in eukaryotes, is critical for catalytic activity. This post-translational modification is severely defective in multiple sulfatase deficiency (MSD).

The protein localises to the cell membrane. In terms of biological role, sulfatase involved in ulvan degradation. Ulvan is the main polysaccharide component of the Ulvales (green seaweed) cell wall. It is composed of disaccharide building blocks comprising 3-sulfated rhamnose (Rha3S) linked to D-glucuronic acid (GlcA), L-iduronic acid (IduA), or D-xylose (Xyl). The protein is Ulvan-active sulfatase of Formosa agariphila (strain DSM 15362 / KCTC 12365 / LMG 23005 / KMM 3901 / M-2Alg 35-1).